The chain runs to 103 residues: Histone H4 (103 aa).

Over residues 1–14 the composition is skewed to gly residues; that stretch reads MTGRGKGGKGLGKG. The interval 1–20 is disordered; that stretch reads MTGRGKGGKGLGKGGAKRHR. An N6-acetyl-N6-methyllysine; alternate mark is found at Lys-6 and Lys-13. The DNA-binding element occupies 17 to 21; it reads KRHRK.

The protein belongs to the histone H4 family. As to quaternary structure, the nucleosome is a histone octamer containing two molecules each of H2A, H2B, H3 and H4 assembled in one H3-H4 heterotetramer and two H2A-H2B heterodimers. The octamer wraps approximately 147 bp of DNA.

The protein localises to the nucleus. Its subcellular location is the chromosome. Functionally, core component of nucleosome. Nucleosomes wrap and compact DNA into chromatin, limiting DNA accessibility to the cellular machineries which require DNA as a template. Histones thereby play a central role in transcription regulation, DNA repair, DNA replication and chromosomal stability. DNA accessibility is regulated via a complex set of post-translational modifications of histones, also called histone code, and nucleosome remodeling. The sequence is that of Histone H4 from Diadromus pulchellus (Parasitic wasp).